The chain runs to 205 residues: Urease accessory protein UreE (205 aa).

Basic and acidic residues predominate over residues 170–192; the sequence is EHHGHSHSHSHDHDHDHDHDHQH. Residues 170–205 form a disordered region; sequence EHHGHSHSHSHDHDHDHDHDHQHGPCCSHGHHHGHR.

The protein belongs to the UreE family.

The protein resides in the cytoplasm. Involved in urease metallocenter assembly. Binds nickel. Probably functions as a nickel donor during metallocenter assembly. The chain is Urease accessory protein UreE from Burkholderia pseudomallei (strain 668).